The following is a 126-amino-acid chain: Aspartate 1-decarboxylase (126 aa).

Catalysis depends on Ser-25, which acts as the Schiff-base intermediate with substrate; via pyruvic acid. At Ser-25 the chain carries Pyruvic acid (Ser). Thr-57 lines the substrate pocket. Tyr-58 (proton donor) is an active-site residue. Residue 73–75 (GAA) participates in substrate binding.

This sequence belongs to the PanD family. In terms of assembly, heterooctamer of four alpha and four beta subunits. Pyruvate serves as cofactor. Post-translationally, is synthesized initially as an inactive proenzyme, which is activated by self-cleavage at a specific serine bond to produce a beta-subunit with a hydroxyl group at its C-terminus and an alpha-subunit with a pyruvoyl group at its N-terminus.

It localises to the cytoplasm. It catalyses the reaction L-aspartate + H(+) = beta-alanine + CO2. It participates in cofactor biosynthesis; (R)-pantothenate biosynthesis; beta-alanine from L-aspartate: step 1/1. Its function is as follows. Catalyzes the pyruvoyl-dependent decarboxylation of aspartate to produce beta-alanine. The sequence is that of Aspartate 1-decarboxylase from Alkalilimnicola ehrlichii (strain ATCC BAA-1101 / DSM 17681 / MLHE-1).